Consider the following 1198-residue polypeptide: Tetratricopeptide repeat protein 17 (1198 aa).

A TPR 1 repeat occupies 295–328; sequence FTSYYTLGNIYAMLGEYNHSVLCYDHALQAKPGF. Residues 340–382 adopt a coiled-coil conformation; it reads CQQKLEQKLEAQHRSLQRTLNELKEYQKQHDHYLRQQEILEKH. 2 TPR repeats span residues 619–652 and 689–722; these read WLILNEAGLYWRAVGNSTFAIACLQRALNLAPVQ and PLTFLSLGNAYLALKNVSGALEAFRQALKLSTKC. Disordered stretches follow at residues 774 to 793 and 902 to 954; these read LDAAAEEPSGHGADEDPVLS and VKKP…YQSL. Positions 902 to 914 are enriched in basic residues; sequence VKKPKGDHKKPPG. 3 TPR repeats span residues 1071–1105, 1108–1141, and 1142–1175; these read SWVLSSMAALYWRVKGQGKKAIDCLRQALHYAPHQ, DVPLISLANILHNAKLWNDAVIVATMAVEIAPHF, and AVNHFTLGNVYVAMEEFEKALVWYESTLKLQPEF.

It belongs to the TTC17 family. Interacts with CATIP.

The protein resides in the cytoplasm. It localises to the cell membrane. It is found in the cytoskeleton. Functionally, plays a role in primary ciliogenesis by modulating actin polymerization. The chain is Tetratricopeptide repeat protein 17 (Ttc17) from Mus musculus (Mouse).